The following is a 347-amino-acid chain: MFKGFQKPKRLVANTETLTERYGMFTAQPFQRGFGTTIGNSLRRVLLSSIEGAAITAVRIEGVEHEFSPIPGVVEDATDIILNLKQIPFKISSDGIKTVRLSVDSHGDVRSGQIETDADVEVLDRDVHVATVSEGGKLNIEMRLKSGRGYVSADKNFDEDLALGYIPIDSVHSPVRKVNFAVEAARLGQMTDYDKLTLEVWTNGAVSPQDSIGYAAKLLKDHMTIFINFEEVPEQTEEISERGMDKMNEVLNRSVEELELSVRSYNCLKNANIQSIGELVQKTEAEMLRTKNFGRKSLNEIKEILANMGLSLGMRIDQHGRLVAPPPSAGGGPDFGPEDDGQDQIGE.

The alpha N-terminal domain (alpha-NTD) stretch occupies residues 1 to 230; the sequence is MFKGFQKPKR…DHMTIFINFE (230 aa). The tract at residues 247 to 347 is alpha C-terminal domain (alpha-CTD); sequence MNEVLNRSVE…EDDGQDQIGE (101 aa). The tract at residues 320–347 is disordered; sequence GRLVAPPPSAGGGPDFGPEDDGQDQIGE. A compositionally biased stretch (acidic residues) spans 336 to 347; it reads GPEDDGQDQIGE.

Belongs to the RNA polymerase alpha chain family. Homodimer. The RNAP catalytic core consists of 2 alpha, 1 beta, 1 beta' and 1 omega subunit. When a sigma factor is associated with the core the holoenzyme is formed, which can initiate transcription.

It carries out the reaction RNA(n) + a ribonucleoside 5'-triphosphate = RNA(n+1) + diphosphate. In terms of biological role, DNA-dependent RNA polymerase catalyzes the transcription of DNA into RNA using the four ribonucleoside triphosphates as substrates. This Solibacter usitatus (strain Ellin6076) protein is DNA-directed RNA polymerase subunit alpha.